The primary structure comprises 152 residues: Natriuretic peptides A (152 aa).

A signal peptide spans 1-24; that stretch reads MGSFSITKGFFLFLAFWLPGHIGA. 2 propeptides span residues 25–122 and 92–102; these read NPVY…AGPR and DGGALGRGPWD. The disordered stretch occupies residues 54 to 104; that stretch reads DEVMPPQALSEQTDEAGAALSSLSEVPPWTGEVNPSQRDGGALGRGPWDPS. The residue at position 128 (S128) is a Phosphoserine. C129 and C145 are joined by a disulfide. Residues 146 to 150 are important for degradation of atrial natriuretic peptide by IDE; sequence NSFRY.

It belongs to the natriuretic peptide family. In terms of assembly, homodimer; disulfide-linked antiparallel dimer. The precursor molecule is proteolytically cleaved by CORIN at Arg-122 to produce the atrial natriuretic peptide. Undergoes further proteolytic cleavage by unknown proteases to give rise to long-acting natriuretic peptide, vessel dilator and kaliuretic peptide. Additional processing gives rise to the auriculin and atriopeptin peptides. In the kidneys, alternative processing by an unknown protease results in the peptide urodilatin. In terms of processing, cleavage by MME initiates degradation of the factor and thereby regulates its activity. Degradation by IDE results in reduced activation of NPR1 (in vitro). During IDE degradation, the resulting products can temporarily stimulate NPR2 to produce cGMP, before the fragments are completely degraded and inactivated by IDE (in vitro). Post-translationally, degraded by IDE. Phosphorylation on Ser-128 decreases vasorelaxant activity. High levels of expression in the atria compared to the ventricles. Very low levels of expression detected in extracardiac tissues such as the brain, hypothalamus, pituitary, lung and aorta. In terms of tissue distribution, atria (at protein level). As to expression, high levels of expression in the atria with very low levels of expression in the ventricles (at protein level). Relatively low levels of expression detected in the brain compared to the atria (at protein level).

The protein resides in the secreted. It is found in the perikaryon. It localises to the cell projection. In terms of biological role, hormone that plays a key role in mediating cardio-renal homeostasis, and is involved in vascular remodeling and regulating energy metabolism. Acts by specifically binding and stimulating NPR1 to produce cGMP, which in turn activates effector proteins, such as PRKG1, that drive various biological responses. Regulates vasodilation, natriuresis, diuresis and aldosterone synthesis and is therefore essential for regulating blood pressure, controlling the extracellular fluid volume and maintaining the fluid-electrolyte balance. Also involved in inhibiting cardiac remodeling and cardiac hypertrophy by inducing cardiomyocyte apoptosis and attenuating the growth of cardiomyocytes and fibroblasts. Plays a role in female pregnancy by promoting trophoblast invasion and spiral artery remodeling in uterus, and thus prevents pregnancy-induced hypertension. In adipose tissue, acts in various cGMP- and PKG-dependent pathways to regulate lipid metabolism and energy homeostasis. This includes up-regulating lipid metabolism and mitochondrial oxygen utilization by activating the AMP-activated protein kinase (AMPK), and increasing energy expenditure by acting via MAPK11 to promote the UCP1-dependent thermogenesis of brown adipose tissue. Binds the clearance receptor NPR3 which removes the hormone from circulation. Its function is as follows. May have a role in cardio-renal homeostasis through regulation of natriuresis, diuresis, vasodilation, and inhibiting aldosterone synthesis. In vitro, promotes the production of cGMP and induces vasodilation. May promote natriuresis, at least in part, by enhancing prostaglandin E2 synthesis resulting in the inhibition of renal Na+-K+-ATPase. However reports on the involvement of this peptide in mammal blood volume and blood pressure homeostasis are conflicting; according to a report, in vivo it is not sufficient to activate cGMP and does not inhibit collecting duct transport nor effect diuresis and natriuresis. Appears to bind to specific receptors that are distinct from the receptors bound by atrial natriuretic peptide and vessel dilator. Possibly enhances protein excretion in urine by decreasing proximal tubular protein reabsorption. May have a role in cardio-renal homeostasis through regulation of natriuresis, diuresis, and vasodilation. In vitro, promotes the production of cGMP and induces vasodilation. May promote natriuresis, at least in part, by enhancing prostaglandin E2 synthesis resulting in the inhibition of renal Na+-K+-ATPase. However reports on the involvement of this peptide in mammal blood volume and blood pressure homeostasis are conflicting; according to a report, in vivo it is not sufficient to activate cGMP and does not inhibit collecting duct transport nor effect diuresis and natriuresis. Appears to bind to specific receptors that are distinct from the receptors bound by the atrial natriuretic and long-acting natriuretic peptides. Possibly functions in protein excretion in urine by maintaining the integrity of the proximal tubules and enhancing protein excretion by decreasing proximal tubular protein reabsorption. Functionally, may have a role in cardio-renal homeostasis through regulation of diuresis and inhibiting aldosterone synthesis. In vitro, promotes the production of cGMP and induces vasodilation. May promote natriuresis, at least in part, by enhancing prostaglandin E2 synthesis resulting in the inhibition of renal Na+-K+-ATPase. May have a role in potassium excretion but not sodium excretion (natriuresis). Possibly enhances protein excretion in urine by decreasing proximal tubular protein reabsorption. In terms of biological role, hormone produced in the kidneys that appears to be important for maintaining cardio-renal homeostasis. Mediates vasodilation, natriuresis and diuresis primarily in the renal system, in order to maintain the extracellular fluid volume and control the fluid-electrolyte balance. Specifically binds and stimulates cGMP production by renal transmembrane receptors, likely NPR1. Urodilatin not ANP, may be the natriuretic peptide responsible for the regulation of sodium and water homeostasis in the kidney. Its function is as follows. May have a role in cardio-renal homeostasis through regulation of natriuresis and vasodilation. In vivo promotes natriuresis and in vitro, vasodilates renal artery strips. May have a role in cardio-renal homeostasis through regulation of regulation of natriuresis and vasodilation. In vivo promotes natriuresis. In vitro, vasodilates intestinal smooth muscle but not smooth muscle strips. Functionally, may have a role in cardio-renal homeostasis through regulation of natriuresis and vasodilation. In vivo promotes natriuresis. In vitro, selectively vasodilates intestinal and vascular smooth muscle strips. In terms of biological role, may have a role in cardio-renal homeostasis through regulation of natriuresis and vasodilation. In vivo promotes natriuresis. In vitro, selectively vasodilates intestinal smooth muscle but not vascular smooth muscle strips. The polypeptide is Natriuretic peptides A (Nppa) (Rattus norvegicus (Rat)).